Here is a 223-residue protein sequence, read N- to C-terminus: ATP-dependent dethiobiotin synthetase BioD (223 aa).

An ATP-binding site is contributed by 11–16 (DIGKTY). Residue threonine 15 participates in Mg(2+) binding. Lysine 36 is a catalytic residue. Position 40 (threonine 40) interacts with substrate. Residues aspartate 50, 110–113 (EGAG), and 174–175 (NN) contribute to the ATP site. Mg(2+)-binding residues include aspartate 50 and glutamate 110.

This sequence belongs to the dethiobiotin synthetase family. Homodimer. It depends on Mg(2+) as a cofactor.

It localises to the cytoplasm. The catalysed reaction is (7R,8S)-7,8-diammoniononanoate + CO2 + ATP = (4R,5S)-dethiobiotin + ADP + phosphate + 3 H(+). It functions in the pathway cofactor biosynthesis; biotin biosynthesis; biotin from 7,8-diaminononanoate: step 1/2. Functionally, catalyzes a mechanistically unusual reaction, the ATP-dependent insertion of CO2 between the N7 and N8 nitrogen atoms of 7,8-diaminopelargonic acid (DAPA, also called 7,8-diammoniononanoate) to form a ureido ring. The sequence is that of ATP-dependent dethiobiotin synthetase BioD from Staphylococcus epidermidis (strain ATCC 35984 / DSM 28319 / BCRC 17069 / CCUG 31568 / BM 3577 / RP62A).